The primary structure comprises 423 residues: Serine--tRNA ligase (423 aa).

231–233 provides a ligand contact to L-serine; that stretch reads TGE. 262 to 264 provides a ligand contact to ATP; it reads RQE. Residue Glu-285 participates in L-serine binding. 349 to 352 lines the ATP pocket; the sequence is EISS. Ser-385 is an L-serine binding site.

It belongs to the class-II aminoacyl-tRNA synthetase family. Type-1 seryl-tRNA synthetase subfamily. As to quaternary structure, homodimer. The tRNA molecule binds across the dimer.

Its subcellular location is the cytoplasm. The enzyme catalyses tRNA(Ser) + L-serine + ATP = L-seryl-tRNA(Ser) + AMP + diphosphate + H(+). The catalysed reaction is tRNA(Sec) + L-serine + ATP = L-seryl-tRNA(Sec) + AMP + diphosphate + H(+). It functions in the pathway aminoacyl-tRNA biosynthesis; selenocysteinyl-tRNA(Sec) biosynthesis; L-seryl-tRNA(Sec) from L-serine and tRNA(Sec): step 1/1. Functionally, catalyzes the attachment of serine to tRNA(Ser). Is also able to aminoacylate tRNA(Sec) with serine, to form the misacylated tRNA L-seryl-tRNA(Sec), which will be further converted into selenocysteinyl-tRNA(Sec). The protein is Serine--tRNA ligase of Phytoplasma mali (strain AT).